The following is a 109-amino-acid chain: UPF0060 membrane protein HEAR0108 (109 aa).

Transmembrane regions (helical) follow at residues 7-27 (VALF…PYLW), 33-53 (SIWL…LLSL), 63-83 (AAYG…VDGI), and 87-107 (NWDV…MFAP).

Belongs to the UPF0060 family.

The protein resides in the cell inner membrane. In Herminiimonas arsenicoxydans, this protein is UPF0060 membrane protein HEAR0108.